Reading from the N-terminus, the 377-residue chain is Homoserine O-acetyltransferase (377 aa).

Residues 48–347 form the AB hydrolase-1 domain; it reads NVVLIEHALT…PVGHDAFLTE (300 aa). Ser143 acts as the Nucleophile in catalysis. Residue Arg213 coordinates substrate. Residues Asp311 and His341 contribute to the active site. Substrate is bound at residue Asp342.

This sequence belongs to the AB hydrolase superfamily. MetX family. In terms of assembly, homodimer.

It is found in the cytoplasm. The catalysed reaction is L-homoserine + acetyl-CoA = O-acetyl-L-homoserine + CoA. Its pathway is amino-acid biosynthesis; L-methionine biosynthesis via de novo pathway; O-acetyl-L-homoserine from L-homoserine: step 1/1. Its function is as follows. Transfers an acetyl group from acetyl-CoA to L-homoserine, forming acetyl-L-homoserine. The chain is Homoserine O-acetyltransferase from Corynebacterium glutamicum (strain ATCC 13032 / DSM 20300 / JCM 1318 / BCRC 11384 / CCUG 27702 / LMG 3730 / NBRC 12168 / NCIMB 10025 / NRRL B-2784 / 534).